A 754-amino-acid polypeptide reads, in one-letter code: Carbon catabolite repressor protein 4 homolog 6 (754 aa).

2 disordered regions span residues 34–65 (PYRG…DQFV) and 85–176 (EPYR…KTPP). Positions 50–61 (FSDRPYNDDAGR) are enriched in basic and acidic residues. Composition is skewed to polar residues over residues 96 to 106 (QRQQPPFNQNY) and 116 to 133 (GQWQ…NQNY). The segment covering 162–171 (KPSDYREWEY) has biased composition (basic and acidic residues). A Mg(2+)-binding site is contributed by glutamate 237. Disordered regions lie at residues 404 to 431 (VSAE…QGQV) and 494 to 558 (IENR…DQDI). Composition is skewed to polar residues over residues 415 to 431 (NYTT…QGQV), 503 to 525 (GNLS…QHAS), and 534 to 545 (DRSVSSGLSETE).

It belongs to the CCR4/nocturin family. In terms of assembly, component of the CCR4-NOT complex, at least composed of CRR4 and CAF1 proteins. Requires Mg(2+) as cofactor.

Its subcellular location is the nucleus. It is found in the cytoplasm. The catalysed reaction is Exonucleolytic cleavage of poly(A) to 5'-AMP.. Its function is as follows. Acts as a catalytic component of the CCR4-NOT core complex, which in the nucleus seems to be a general transcription factor, and in the cytoplasm the major mRNA deadenylase involved in mRNA turnover. The sequence is that of Carbon catabolite repressor protein 4 homolog 6 (CCR4-6) from Arabidopsis thaliana (Mouse-ear cress).